The sequence spans 141 residues: MMNTKKLIKMAKKWQQRAALHRKRISFQRSSSATSSTAAEKGCFVVYTTDSTRFAFPLSYLSNSVFQELLKISEEEFGLPTGGPITSPFDSVFLEYLIKLVQRRMDADTEKALLMSISSARCSSQCSLKLQERSTQQLLVF.

This sequence belongs to the ARG7 family.

It is found in the cell membrane. Its function is as follows. May promote auxin-stimulated organ elongation, such as hypocotyls, stamen filaments and petals. This chain is Auxin-responsive protein SAUR64, found in Arabidopsis thaliana (Mouse-ear cress).